Here is a 431-residue protein sequence, read N- to C-terminus: Probable glucarate dehydratase (431 aa).

Substrate contacts are provided by H29, T108, Y153, and K198. K200 (proton acceptor) is an active-site residue. D228 and N276 together coordinate Mg(2+). Residues 228–230 (DPN), N276, 327–329 (HSN), H356, and R410 each bind substrate. The active-site Proton acceptor is H327.

It belongs to the mandelate racemase/muconate lactonizing enzyme family. GlucD subfamily. Requires Mg(2+) as cofactor.

The catalysed reaction is D-glucarate = 5-dehydro-4-deoxy-D-glucarate + H2O. It functions in the pathway carbohydrate acid metabolism; D-glucarate degradation; 2,5-dioxopentanoate from D-glucarate: step 1/2. Catalyzes the dehydration of glucarate to 5-keto-4-deoxy-D-glucarate (5-kdGluc). The polypeptide is Probable glucarate dehydratase (gudD) (Streptomyces coelicolor (strain ATCC BAA-471 / A3(2) / M145)).